A 1240-amino-acid chain; its full sequence is Phospholipid-transporting ATPase 6 (1240 aa).

At 1–75 (MARRRIRSRI…TTRYNLLTFL (75 aa)) the chain is on the cytoplasmic side. A helical membrane pass occupies residues 76-97 (PKCLYEQFHRVANFYFLVAAIL). Residues 98-101 (SVFP) are Extracellular-facing. Residues 102–124 (LSPFNKWSMIAPLVFVVGLSMGK) form a helical membrane-spanning segment. Residues 125–306 (EALEDWRRFM…SRIEKRMDYI (182 aa)) are Cytoplasmic-facing. The chain crosses the membrane as a helical span at residues 307–328 (IYTLFALLLTVSFISSLGFAVM). The Extracellular segment spans residues 329–360 (TKLLMAEWWYLRPDKPESLTNPTNPLYAWVVH). A helical membrane pass occupies residues 361-378 (LITALLLYGYLIPISLYV). Residues 379–943 (SIEVVKVLQA…HGHWCYKRIA (565 aa)) lie on the Cytoplasmic side of the membrane. The active-site 4-aspartylphosphate intermediate is aspartate 426. Lysine 625 is covalently cross-linked (Glycyl lysine isopeptide (Lys-Gly) (interchain with G-Cter in ubiquitin)). Residues aspartate 888 and aspartate 892 each coordinate Mg(2+). Residues 944–963 (QMICYFFYKNITFGLTLFYF) form a helical membrane-spanning segment. Residues 964 to 977 (ECFTGFSGQSIYND) are Extracellular-facing. A helical membrane pass occupies residues 978-997 (SYLLLFNVVLTSLPVISLGV). Topologically, residues 998 to 1027 (FEQDVPSDVCLQFPALYQQGPKNLFFDWYR) are cytoplasmic. The chain crosses the membrane as a helical span at residues 1028-1050 (ILGWMGNGVYASIVIFTLNLGIF). At 1051–1063 (HVQSFRSDGQTAD) the chain is on the extracellular side. Residues 1064–1086 (MNAMGTAMFTCIIWAVNVQIALT) form a helical membrane-spanning segment. Residues 1087–1092 (MSHFTW) are Cytoplasmic-facing. Residues 1093 to 1113 (IQHVMIWGSIGAWYVFLALYG) traverse the membrane as a helical segment. Topologically, residues 1114–1130 (MLPVKLSGNIFHMLVEI) are extracellular. Residues 1131-1155 (LAPAPIFWLTSLLVIAATTLPYLFH) traverse the membrane as a helical segment. Topologically, residues 1156–1240 (ISYQRSVNPL…SNDTPSSNSQ (85 aa)) are cytoplasmic.

Belongs to the cation transport ATPase (P-type) (TC 3.A.3) family. Type IV subfamily.

It is found in the cell membrane. The protein resides in the endomembrane system. It catalyses the reaction ATP + H2O + phospholipidSide 1 = ADP + phosphate + phospholipidSide 2.. Functionally, involved in transport of phospholipids and in regulation of pollen plasma membrane lipid asymmetry. The polypeptide is Phospholipid-transporting ATPase 6 (Arabidopsis thaliana (Mouse-ear cress)).